The following is a 322-amino-acid chain: ATP-dependent 6-phosphofructokinase (322 aa).

An ATP-binding site is contributed by glycine 11. Position 21-25 (21-25 (RAVTR)) interacts with ADP. Residues 72 to 73 (RC) and 102 to 105 (GDGS) each bind ATP. Position 103 (aspartate 103) interacts with Mg(2+). 127 to 129 (TID) contacts substrate. Aspartate 129 (proton acceptor) is an active-site residue. ADP is bound at residue arginine 156. Substrate is bound by residues arginine 164 and 171 to 173 (MGR). Residues 187-189 (GAE), arginine 213, and 215-217 (KKH) contribute to the ADP site. Substrate contacts are provided by residues glutamate 224, arginine 245, and 251 to 254 (HIQR).

The protein belongs to the phosphofructokinase type A (PFKA) family. ATP-dependent PFK group I subfamily. Prokaryotic clade 'B1' sub-subfamily. In terms of assembly, homotetramer. Requires Mg(2+) as cofactor.

It is found in the cytoplasm. It carries out the reaction beta-D-fructose 6-phosphate + ATP = beta-D-fructose 1,6-bisphosphate + ADP + H(+). It functions in the pathway carbohydrate degradation; glycolysis; D-glyceraldehyde 3-phosphate and glycerone phosphate from D-glucose: step 3/4. With respect to regulation, allosterically activated by ADP and other diphosphonucleosides, and allosterically inhibited by phosphoenolpyruvate. Catalyzes the phosphorylation of D-fructose 6-phosphate to fructose 1,6-bisphosphate by ATP, the first committing step of glycolysis. This chain is ATP-dependent 6-phosphofructokinase, found in Staphylococcus epidermidis (strain ATCC 35984 / DSM 28319 / BCRC 17069 / CCUG 31568 / BM 3577 / RP62A).